We begin with the raw amino-acid sequence, 988 residues long: DNA-binding protein SMUBP-2 (988 aa).

The residue at position 2 (Ala-2) is an N-acetylalanine. Residues 213-220 (GPPGTGKT), Gln-402, Tyr-441, and Glu-570 contribute to the ATP site. An SS DNA-binding region spans residues 637–783 (TAFEYLDDIV…KARHITVSRR (147 aa)). Disordered regions lie at residues 651 to 722 (THEG…GGTD), 765 to 820 (LKHD…PHGS), and 835 to 872 (RQQG…ALPS). Over residues 702-718 (SQVQPQHSSKANGSDRT) the composition is skewed to polar residues. The 64-residue stretch at 721 to 784 (TDRTEHFRAM…ARHITVSRRS (64 aa)) folds into the R3H domain. The span at 765–775 (LKHDSTGEGKA) shows a compositional bias: basic and acidic residues. A phosphoserine mark is found at Ser-797 and Ser-800. Residues 802–817 (AQAEPEPQVEQPVGQP) are compositionally biased toward low complexity. Over residues 835-844 (RQQGCQAQSQ) the composition is skewed to polar residues. Positions 857–861 (KKKKK) match the Nuclear localization signal motif. An AN1-type zinc finger spans residues 884 to 933 (VKADNTCSFTKCSASTTTLGQFCMHCSRRYCLSHHLPEIHGCGEKARAHA). Cys-890, Cys-895, Cys-906, Cys-909, Cys-914, His-917, His-923, and Cys-925 together coordinate Zn(2+). The tract at residues 943–988 (LYAGSGTKDRALDPAKRAQLQRKLDKKLGELSSQRTSKKKEKERGT) is disordered. A compositionally biased stretch (basic and acidic residues) spans 949 to 971 (TKDRALDPAKRAQLQRKLDKKLG). Residues 957–986 (AKRAQLQRKLDKKLGELSSQRTSKKKEKER) adopt a coiled-coil conformation.

This sequence belongs to the DNA2/NAM7 helicase family. In terms of assembly, homooligomer. Interacts with RUVBL1. Interacts with RUVBL2. Interacts with GTF3C1. Interacts with ABT1. Interacts with ribosomes. As to expression, expressed in liver, skin, muscle, heart, brain, spleen and kidney.

Its subcellular location is the nucleus. The protein resides in the cytoplasm. It is found in the cell projection. It localises to the axon. It carries out the reaction ATP + H2O = ADP + phosphate + H(+). 5' to 3' helicase that unwinds RNA and DNA duplexes in an ATP-dependent reaction. Specific to 5'-phosphorylated single-stranded guanine-rich sequences. May play a role in RNA metabolism, ribosome biogenesis or initiation of translation. May play a role in regulation of transcription. Interacts with tRNA-Tyr. This chain is DNA-binding protein SMUBP-2 (Ighmbp2), found in Rattus norvegicus (Rat).